A 72-amino-acid polypeptide reads, in one-letter code: Translation initiation factor IF-1 (72 aa).

The region spanning 1–72 is the S1-like domain; that stretch reads MAKEDVIEIE…TRGRITYRFK (72 aa).

It belongs to the IF-1 family. Component of the 30S ribosomal translation pre-initiation complex which assembles on the 30S ribosome in the order IF-2 and IF-3, IF-1 and N-formylmethionyl-tRNA(fMet); mRNA recruitment can occur at any time during PIC assembly.

The protein resides in the cytoplasm. Its function is as follows. One of the essential components for the initiation of protein synthesis. Stabilizes the binding of IF-2 and IF-3 on the 30S subunit to which N-formylmethionyl-tRNA(fMet) subsequently binds. Helps modulate mRNA selection, yielding the 30S pre-initiation complex (PIC). Upon addition of the 50S ribosomal subunit IF-1, IF-2 and IF-3 are released leaving the mature 70S translation initiation complex. This chain is Translation initiation factor IF-1, found in Streptococcus suis (strain 05ZYH33).